Reading from the N-terminus, the 172-residue chain is Ly6/PLAUR domain-containing protein 6B (172 aa).

The first 25 residues, 1-25, serve as a signal peptide directing secretion; it reads MLLLCHILAVTILQILIISENWVFA. The UPAR/Ly6 domain maps to 46-137; that stretch reads FKCFTCENAG…VELPTNHTNA (92 aa). The sufficient for inhibiting alpha-7 nAChR currents stretch occupies residues 46–140; it reads FKCFTCENAG…PTNHTNAVFA (95 aa). 6 disulfides stabilise this stretch: Cys48-Cys76, Cys51-Cys60, Cys69-Cys95, Cys101-Cys120, Cys106-Cys117, and Cys121-Cys126. The GPI-anchor amidated serine moiety is linked to residue Ser148. A propeptide spans 149–172 (removed in mature form); sequence GSSVSSVPSPYLLVLAWLFMLPLL.

It is found in the cell membrane. Likely acts as a modulator of nicotinic acetylcholine receptors (nAChRs) activity. In vitro acts on nAChRs in a subtype- and stoichiometry-dependent manner. Modulates specifically alpha-3(3):beta-4(2) nAChRs by enhancing the sensitivity to ACh, decreasing ACh-induced maximal current response and increasing the rate of desensitization to ACh; has no effect on alpha-7 homomeric nAChRs; modulates alpha-3(2):alpha-5:beta-4(2) nAChRs in the context of CHRNA5/alpha-5 variant Asn-398 but not its wild-type sequence. However, according to another report in vitro it can weakly inhibits alpha-7 nAChRs. This chain is Ly6/PLAUR domain-containing protein 6B (Lypd6b), found in Mus musculus (Mouse).